A 381-amino-acid chain; its full sequence is N-acetyldiaminopimelate deacetylase (381 aa).

The active site involves Asp-71. Glu-130 (proton acceptor) is an active-site residue.

Belongs to the peptidase M20A family. N-acetyldiaminopimelate deacetylase subfamily.

The catalysed reaction is N-acetyl-(2S,6S)-2,6-diaminopimelate + H2O = (2S,6S)-2,6-diaminopimelate + acetate. It participates in amino-acid biosynthesis; L-lysine biosynthesis via DAP pathway; LL-2,6-diaminopimelate from (S)-tetrahydrodipicolinate (acetylase route): step 3/3. Catalyzes the conversion of N-acetyl-diaminopimelate to diaminopimelate and acetate. The polypeptide is N-acetyldiaminopimelate deacetylase (Ligilactobacillus salivarius (strain UCC118) (Lactobacillus salivarius)).